Here is a 339-residue protein sequence, read N- to C-terminus: Pre-mRNA-splicing factor syf2 (339 aa).

The interval 1–136 (MPPEKKRKTE…LQSDPSQLTA (136 aa)) is disordered. Positions 7–16 (RKTEPEDKAE) are enriched in basic and acidic residues. The segment covering 17 to 37 (VTQQENDVAESTTEPNNQTVT) has biased composition (polar residues). Residues 45 to 93 (VTEAALATTSSSSPPVLSASETAQPDTAATSQSSSTPPTSTSAAESAAA) are compositionally biased toward low complexity. The span at 94-103 (KARERAERFR) shows a compositional bias: basic and acidic residues. Polar residues predominate over residues 126 to 135 (RLQSDPSQLT).

The protein belongs to the SYF2 family. Associated with the spliceosome.

Its subcellular location is the nucleus. In terms of biological role, involved in pre-mRNA splicing. The protein is Pre-mRNA-splicing factor syf2 (msp-4) of Neurospora crassa (strain ATCC 24698 / 74-OR23-1A / CBS 708.71 / DSM 1257 / FGSC 987).